The chain runs to 235 residues: 2-C-methyl-D-erythritol 4-phosphate cytidylyltransferase (235 aa).

This sequence belongs to the IspD/TarI cytidylyltransferase family. IspD subfamily.

The enzyme catalyses 2-C-methyl-D-erythritol 4-phosphate + CTP + H(+) = 4-CDP-2-C-methyl-D-erythritol + diphosphate. The protein operates within isoprenoid biosynthesis; isopentenyl diphosphate biosynthesis via DXP pathway; isopentenyl diphosphate from 1-deoxy-D-xylulose 5-phosphate: step 2/6. Catalyzes the formation of 4-diphosphocytidyl-2-C-methyl-D-erythritol from CTP and 2-C-methyl-D-erythritol 4-phosphate (MEP). The polypeptide is 2-C-methyl-D-erythritol 4-phosphate cytidylyltransferase (Pseudomonas putida (strain ATCC 47054 / DSM 6125 / CFBP 8728 / NCIMB 11950 / KT2440)).